Consider the following 60-residue polypeptide: uncharacterized protein (60 aa).

This is an uncharacterized protein from Schizosaccharomyces pombe (strain 972 / ATCC 24843) (Fission yeast).